A 252-amino-acid polypeptide reads, in one-letter code: MGQKTNPNGLRLGIIRTWESQWCVNDKEIPNLIKEDFLIRKLINNFTKKSAISQIDIERLKEKNKNRITISVHTAKPGVIIGKDGDTRNKLVAKLKELTQKDVNLNVLEVKNSDKIALLIAQNMAEQLENRMFFRRVQKMAIQKALKAGAKGVKTLISGRLGGAEIARSEGHAEGRVPLHTLRADIDYAAVEAHTTYGVLGIKVWIFHGEVLPGQTILDTRKPFASQSSNTPNRRPRNFKGGNNNHVNAKKN.

Positions isoleucine 39–lysine 111 constitute a KH type-2 domain. Residues lysine 222–asparagine 252 form a disordered region. A compositionally biased stretch (polar residues) spans glycine 241–asparagine 252.

The protein belongs to the universal ribosomal protein uS3 family. As to quaternary structure, part of the 30S ribosomal subunit. Forms a tight complex with proteins S10 and S14.

Binds the lower part of the 30S subunit head. Binds mRNA in the 70S ribosome, positioning it for translation. This chain is Small ribosomal subunit protein uS3, found in Onion yellows phytoplasma (strain OY-M).